The chain runs to 98 residues: Large ribosomal subunit protein bL25 (98 aa).

Residues 1–22 are disordered; sequence MANFVLNATARNEDKQGKGASR.

It belongs to the bacterial ribosomal protein bL25 family. In terms of assembly, part of the 50S ribosomal subunit; part of the 5S rRNA/L5/L18/L25 subcomplex. Contacts the 5S rRNA. Binds to the 5S rRNA independently of L5 and L18.

Its function is as follows. This is one of the proteins that binds to the 5S RNA in the ribosome where it forms part of the central protuberance. The sequence is that of Large ribosomal subunit protein bL25 from Acinetobacter baylyi (strain ATCC 33305 / BD413 / ADP1).